Here is a 101-residue protein sequence, read N- to C-terminus: Ascorbate-specific PTS system EIIB component (101 aa).

The 94-residue stretch at Val3 to Phe96 folds into the PTS EIIB type-2 domain. The Phosphocysteine intermediate role is filled by Cys9. Position 9 is a phosphocysteine (Cys9).

It localises to the cytoplasm. The enzyme catalyses N(pros)-phospho-L-histidyl-[protein] + L-ascorbate(out) = L-ascorbate 6-phosphate(in) + L-histidyl-[protein]. The phosphoenolpyruvate-dependent sugar phosphotransferase system (sugar PTS), a major carbohydrate active transport system, catalyzes the phosphorylation of incoming sugar substrates concomitantly with their translocation across the cell membrane. The enzyme II UlaABC PTS system is involved in ascorbate transport. This chain is Ascorbate-specific PTS system EIIB component (ulaB), found in Shigella sonnei (strain Ss046).